The sequence spans 236 residues: CD81 protein (236 aa).

Residues 1–12 (MGVEGCTKCIKY) lie on the Cytoplasmic side of the membrane. A helical transmembrane segment spans residues 13-33 (LLFVFNFVFWLAGGVILGVAL). Over 34-63 (WLRHDPQTTNLLYLELGDKPAPNTFYVGIY) the chain is Extracellular. A helical membrane pass occupies residues 64 to 84 (ILIAVGAVMMFVGFLGCYGAI). Residues 85–89 (QESQC) lie on the Cytoplasmic side of the membrane. Residues 90–112 (LLGTFFTCLVILFACEVAAGIWG) form a helical membrane-spanning segment. The Extracellular segment spans residues 113-201 (FVNKDQIAKD…QKIDELFSGK (89 aa)). 2 disulfide bridges follow: Cys156/Cys190 and Cys157/Cys175. A helical membrane pass occupies residues 202–224 (LYLIGIAAIVVAVIMIFEMILSM). Glu219 lines the cholesterol pocket. Topologically, residues 225–236 (VLCCGIRNSSVY) are cytoplasmic.

Belongs to the tetraspanin (TM4SF) family. In terms of assembly, homodimer. Part of a complex composed of CD19, CR2/CD21, CD81 and IFITM1/CD225 in the membrane of mature B cells. Interacts (via the second extracellular domain) with CD19; this interaction is initiated early during biosynthesis in the ER and enables trafficking of only properly folded CD19. Part of a complex that includes MHC class II/HLA-DR molecules and IFITM1. Interacts with IFITM1. Interacts with IFITM2 and IFITM3. Part of integrin-tetraspanin complex composed of CD9, CD81, beta-1 and beta-2 integrins in the membrane of monocyte/macrophages. Interacts (via the second extracellular domain) with integrin ITGAV:ITGB3. Interacts with CD247/CD3 zeta, ICAM1 and CD9 at the immune synapse on T cell membrane. Part of a GPCR-tetraspanin complex consisting at least of ADGRG1, CD81, possibly CD9, and GNA11 in which CD81 enhances the association of ADGRG1 with GNA11. Part of a complex composed of CD9, CD81, PTGFRN and IGSF8. Interacts directly with IGSF8. Interacts with CD53 and SCIMP. Interacts with SAMHD1 (via its C-terminus). Interacts with glypican GPC3 and with the transcriptional repressor HHEX; binding to GPC3 decreases the availability of free CD81 for binding to HHEX, resulting in nuclear translocation of HHEX and transcriptional repression. Interacts with CLDN1. Interacts with CLDN6 and CLDN9. Not glycosylated. In terms of processing, likely constitutively palmitoylated at low levels. Protein palmitoylation is up-regulated upon coligation of BCR and CD9-C2R-CD81 complexes in lipid rafts.

It localises to the cell membrane. It is found in the basolateral cell membrane. In terms of biological role, structural component of specialized membrane microdomains known as tetraspanin-enriched microdomains (TERMs), which act as platforms for receptor clustering and signaling. Essential for trafficking and compartmentalization of CD19 receptor on the surface of activated B cells. Upon initial encounter with microbial pathogens, enables the assembly of CD19-CR2/CD21 and B cell receptor (BCR) complexes at signaling TERMs, lowering the threshold dose of antigen required to trigger B cell clonal expansion and antibody production. In T cells, facilitates the localization of CD247/CD3 zeta at antigen-induced synapses with B cells, providing for costimulation and polarization toward T helper type 2 phenotype. Present in MHC class II compartments, may also play a role in antigen presentation. Can act both as positive and negative regulator of homotypic or heterotypic cell-cell fusion processes. Positively regulates sperm-egg fusion and may be involved in acrosome reaction. In myoblasts, associates with CD9 and PTGFRN and inhibits myotube fusion during muscle regeneration. In macrophages, associates with CD9 and beta-1 and beta-2 integrins, and prevents macrophage fusion into multinucleated giant cells specialized in ingesting complement-opsonized large particles. Also prevents the fusion of mononuclear cell progenitors into osteoclasts in charge of bone resorption. May regulate the compartmentalization of enzymatic activities. In T cells, defines the subcellular localization of dNTPase SAMHD1 and permits its degradation by the proteasome, thereby controlling intracellular dNTP levels. Also involved in cell adhesion and motility. Positively regulates integrin-mediated adhesion of macrophages, particularly relevant for the inflammatory response in the lung. In Saguinus oedipus (Cotton-top tamarin), this protein is CD81 protein (CD81).